Here is a 621-residue protein sequence, read N- to C-terminus: MRGLIQTRLLETGTLRTALFLSCYGRVFSSVSDGKGKVSYRERLRSGIVDIKEDDAVDLFQEMTRSRPRPRLIDFSRLFSVVARTKQYDLVLDLCKQMELKGIAHNLYTLSIMINCCCRCRKLSLAFSAMGKIIKLGYEPDTVTFSTLINGLCLEGRVSEALELVDRMVEMGHKPTLITLNALVNGLCLNGKVSDAVLLIDRMVETGFQPNEVTYGPVLKVMCKSGQTALAMELLRKMEERKIKLDAVKYSIIIDGLCKDGSLDNAFNLFNEMEIKGFKADIIIYTTLIRGFCYAGRWDDGAKLLRDMIKRKITPDVVAFSALIDCFVKEGKLREAEELHKEMIQRGISPDTVTYTSLIDGFCKENQLDKANHMLDLMVSKGCGPNIRTFNILINGYCKANLIDDGLELFRKMSLRGVVADTVTYNTLIQGFCELGKLEVAKELFQEMVSRRVRPDIVSYKILLDGLCDNGEPEKALEIFEKIEKSKMELDIGIYNIIIHGMCNASKVDDAWDLFCSLPLKGVKPDVKTYNIMIGGLCKKGSLSEADLLFRKMEEDGHSPNGCTYNILIRAHLGEGDATKSAKLIEEIKRCGFSVDASTVKMVVDMLSDGRLKKSFLDMLS.

PPR repeat units follow at residues 36–70 (GKVS…RPRP), 71–105 (RLID…GIAH), 106–140 (NLYT…GYEP), 141–175 (DTVT…GHKP), 176–210 (TLIT…GFQP), 211–245 (NEVT…KIKL), 246–280 (DAVK…GFKA), 281–315 (DIII…KITP), 316–350 (DVVA…GISP), 351–385 (DTVT…GCGP), 386–420 (NIRT…GVVA), 421–455 (DTVT…RVRP), 456–490 (DIVS…KMEL), 491–525 (DIGI…GVKP), 526–560 (DVKT…GHSP), and 561–595 (NGCT…GFSV).

Belongs to the PPR family. P subfamily.

This is Pentatricopeptide repeat-containing protein At1g12620 from Arabidopsis thaliana (Mouse-ear cress).